The following is a 371-amino-acid chain: Cytochrome b (371 aa).

A run of 4 helical transmembrane segments spans residues Phe25–Val45, Trp69–Ile90, Trp105–Leu125, and Phe170–Ile190. Heme b contacts are provided by His75 and His89. Heme b-binding residues include His174 and His188. His193 provides a ligand contact to a ubiquinone. A run of 4 helical transmembrane segments spans residues His218 to Ser238, Leu280 to His300, Leu312 to Thr332, and Phe339 to Pro358.

This sequence belongs to the cytochrome b family. The cytochrome bc1 complex contains 3 respiratory subunits (MT-CYB, CYC1 and UQCRFS1), 2 core proteins (UQCRC1 and UQCRC2) and probably 6 low-molecular weight proteins. The cofactor is heme b.

Its subcellular location is the mitochondrion inner membrane. Component of the ubiquinol-cytochrome c reductase complex (complex III or cytochrome b-c1 complex) that is part of the mitochondrial respiratory chain. The b-c1 complex mediates electron transfer from ubiquinol to cytochrome c. Contributes to the generation of a proton gradient across the mitochondrial membrane that is then used for ATP synthesis. This is Cytochrome b (MT-CYB) from Antaresia childreni (Children's python).